The following is a 146-amino-acid chain: Hemoglobin subunit beta (146 aa).

Positions 2–146 constitute a Globin domain; that stretch reads HWSAEEKQLI…VAHALARKYH (145 aa). Heme b contacts are provided by H63 and H92.

The protein belongs to the globin family. In terms of assembly, heterotetramer of two alpha chains and two beta chains. Red blood cells.

Involved in oxygen transport from the lung to the various peripheral tissues. In Phasianus colchicus colchicus (Black-necked pheasant), this protein is Hemoglobin subunit beta (HBB).